We begin with the raw amino-acid sequence, 87 residues long: Beta-toxin Ct17 (87 aa).

An N-terminal signal peptide occupies residues 1–19 (MNSLLMITACLVLIGTVWA). In terms of domain architecture, LCN-type CS-alpha/beta spans 20 to 85 (KKDGYLVDKT…TWPLPNKRCG (66 aa)). Cystine bridges form between cysteine 31/cysteine 84, cysteine 35/cysteine 60, cysteine 44/cysteine 65, and cysteine 48/cysteine 67. The residue at position 84 (cysteine 84) is a Cysteine amide.

The protein belongs to the long (4 C-C) scorpion toxin superfamily. Sodium channel inhibitor family. Beta subfamily. In terms of tissue distribution, expressed by the venom gland.

It is found in the secreted. Beta toxins bind voltage-independently at site-4 of sodium channels (Nav) and shift the voltage of activation toward more negative potentials thereby affecting sodium channel activation and promoting spontaneous and repetitive firing. Is possibly lethal to mice, freshwater shrimp and crickets. The chain is Beta-toxin Ct17 from Centruroides tecomanus (Scorpion).